A 185-amino-acid polypeptide reads, in one-letter code: Probable calcium-binding protein CML10 (185 aa).

The interval Met-1 to Met-41 is disordered. EF-hand domains lie at Thr-36 to Ala-71, Ala-72 to Asp-107, Ala-110 to Lys-145, and Ala-146 to Phe-181. Ca(2+)-binding residues include Asp-49, Asn-51, Asp-53, Arg-55, Glu-60, Asp-85, Asp-87, Asp-89, Glu-96, Asp-123, Asp-125, Asn-127, Thr-129, Glu-134, Asp-159, Asn-161, Asp-163, and Glu-170.

Functionally, potential calcium sensor. The protein is Probable calcium-binding protein CML10 (CML10) of Oryza sativa subsp. japonica (Rice).